A 588-amino-acid polypeptide reads, in one-letter code: MSVIKKLPQEVVSKIAAGEVVINPASVVKELVENSLDANATSIEVQIRNGGKSYIKVSDNGIGMSRDDMLIAIDRFTTSKISALEDIYNIHSYGFRGEALSSIAEVSRLIITSSDGNNAHRLEVIGGKIIKITETHRERGTTVEVYDLFFNIPARRKFLSSEKVETRMVTEIVEKFMLVQPSVSFVFKIEDEIVYNASKGSLEDRFSIIFPEVKEFSLIEPLQSEIMQISGIISSPQYTRRNRSGQIFFVNKRFVIDNLLNLSFERGYGEALAQGEHPYGVIFLDFLPDKIDVNIHPQKLQVKFSDPQNVYNEIARTIRTTLRKFSFFQMSISKNSEEEEKYSSEISNQNLKAENYQHTDSEWYPNQFKNLYQKETPQTYRPYEPLSSISQNLLLPQLNEKSLPKEFIVLKDRYIVFEDLDGLVIIDFHAAHERIIYEQLKENKFETVQLLIPLHIKLGKSFLQLSQQLTDEFKKYGFDFEIKTLEDGSGEVVIKQIPSILKVTDASNVFLEVLEEYRIPFEKPKGLTYVLASKACKSAVKTGDKLSHDEVQQIIKEIKSKNLLTCPHGRPIMMKLSFSQLDSFFERI.

It belongs to the DNA mismatch repair MutL/HexB family.

In terms of biological role, this protein is involved in the repair of mismatches in DNA. It is required for dam-dependent methyl-directed DNA mismatch repair. May act as a 'molecular matchmaker', a protein that promotes the formation of a stable complex between two or more DNA-binding proteins in an ATP-dependent manner without itself being part of a final effector complex. This Fervidobacterium nodosum (strain ATCC 35602 / DSM 5306 / Rt17-B1) protein is DNA mismatch repair protein MutL.